Reading from the N-terminus, the 335-residue chain is Urokinase plasminogen activator surface receptor (335 aa).

A signal peptide spans 1–22 (MGHPLLLPLLLLLHTCVPASWG). UPAR/Ly6 domains are found at residues 23–114 (LRCM…RSRY), 115–213 (LECI…PQNG), and 214–305 (HQCY…YRKG). 3 cysteine pairs are disulfide-bonded: cysteine 25–cysteine 46, cysteine 28–cysteine 34, and cysteine 39–cysteine 67. Asparagine 74 is a glycosylation site (N-linked (GlcNAc...) asparagine). 11 disulfide bridges follow: cysteine 93/cysteine 98, cysteine 117/cysteine 144, cysteine 120/cysteine 127, cysteine 137/cysteine 169, cysteine 175/cysteine 192, cysteine 193/cysteine 198, cysteine 216/cysteine 244, cysteine 219/cysteine 227, cysteine 237/cysteine 263, cysteine 269/cysteine 287, and cysteine 288/cysteine 293. Residues asparagine 184, asparagine 194, asparagine 222, and asparagine 255 are each glycosylated (N-linked (GlcNAc...) asparagine). Glycine 305 is lipidated: GPI-anchor amidated glycine. The propeptide at 306–335 (AAPQPGPAHLSLTITLLMTARLWGGTLLWT) is removed in mature form.

Monomer. Interacts (via the UPAR/Ly6 domains) with SRPX2. Interacts with MRC2. Interacts with FAP (seprase); the interaction occurs at the cell surface of invadopodia membrane. Interacts with SORL1 (via N-terminal ectodomain); this interaction decreases PLAUR internalization. The ternary complex composed of PLAUR-PLAU-SERPINE1 also interacts with SORL1.

It is found in the cell membrane. The protein localises to the cell projection. Its subcellular location is the invadopodium membrane. Functionally, acts as a receptor for urokinase plasminogen activator. Plays a role in localizing and promoting plasmin formation. Mediates the proteolysis-independent signal transduction activation effects of U-PA. It is subject to negative-feedback regulation by U-PA which cleaves it into an inactive form. The chain is Urokinase plasminogen activator surface receptor (PLAUR) from Chlorocebus aethiops (Green monkey).